Consider the following 528-residue polypeptide: Bifunctional purine biosynthesis protein PurH (528 aa).

An MGS-like domain is found at 1-146 (MAPTALLSVS…KNHDHVAVLT (146 aa)).

Belongs to the PurH family.

The enzyme catalyses (6R)-10-formyltetrahydrofolate + 5-amino-1-(5-phospho-beta-D-ribosyl)imidazole-4-carboxamide = 5-formamido-1-(5-phospho-D-ribosyl)imidazole-4-carboxamide + (6S)-5,6,7,8-tetrahydrofolate. It catalyses the reaction IMP + H2O = 5-formamido-1-(5-phospho-D-ribosyl)imidazole-4-carboxamide. It participates in purine metabolism; IMP biosynthesis via de novo pathway; 5-formamido-1-(5-phospho-D-ribosyl)imidazole-4-carboxamide from 5-amino-1-(5-phospho-D-ribosyl)imidazole-4-carboxamide (10-formyl THF route): step 1/1. The protein operates within purine metabolism; IMP biosynthesis via de novo pathway; IMP from 5-formamido-1-(5-phospho-D-ribosyl)imidazole-4-carboxamide: step 1/1. The sequence is that of Bifunctional purine biosynthesis protein PurH from Synechococcus sp. (strain WH7803).